The primary structure comprises 467 residues: MLTPVVSYSTVREVKGPLIVIEKTRGVSYGEIGEVIGPDGEPRKVQVIEVGTDYAIAQVLGGTLGLPAKGSTVRFYGKTLKMPVSEELIGRILDGKGQPRDHMPLPPPEDFRDVNGEPLNPYSREYPEEPIETGISAIDGLYTLVRGQKLPIFSGTGLPHNMMAAQVVRQSTVRGSEEEFAVVFVGVGIKTEEALFFMDEFRRTGALRRAVAVLNLASDPVAERILAPRVGLTIAEYLAWQLGYHVLVVITDMTNYCEGLRELSSGRGELPGRRGYPGYMYTDLATIYERAGKAHGKKGSITQFPILTMPHDDITHPIPDLTGYITEGQLVLSRAMWGKGIYPPFDVIMSLSRLAKDAIGEGKTREDHKDVANTLISAYSKALEIRNLATLVGERNLGWRERRYLRFADAFEQKFIKQGYYERRSFEETLDIGWDVLSILPEDELTNARPQITQKFYRRHIFESVKL.

Positions 95-114 (GKGQPRDHMPLPPPEDFRDV) are disordered.

It belongs to the ATPase alpha/beta chains family. In terms of assembly, has multiple subunits with at least A(3), B(3), C, D, E, F, H, I and proteolipid K(x).

It localises to the cell membrane. In terms of biological role, component of the A-type ATP synthase that produces ATP from ADP in the presence of a proton gradient across the membrane. The B chain is a regulatory subunit. This is A-type ATP synthase subunit B from Pyrobaculum islandicum (strain DSM 4184 / JCM 9189 / GEO3).